Reading from the N-terminus, the 71-residue chain is uncharacterized protein (71 aa).

A compositionally biased stretch (basic residues) spans 1–16 (MAKSQAKKKRGHRLRN). Disordered regions lie at residues 1–39 (MAKS…RMTK) and 51–71 (KNPY…QKAA). The segment covering 25–35 (RGSTPSFSTHG) has biased composition (polar residues). A compositionally biased stretch (basic and acidic residues) spans 51–64 (KNPYDHTAVDDKDF).

This is an uncharacterized protein from Bacillus subtilis (strain 168).